Consider the following 382-residue polypeptide: Anhydro-N-acetylmuramic acid kinase (382 aa).

9 to 16 (GTSLDGID) contributes to the ATP binding site.

Belongs to the anhydro-N-acetylmuramic acid kinase family.

It catalyses the reaction 1,6-anhydro-N-acetyl-beta-muramate + ATP + H2O = N-acetyl-D-muramate 6-phosphate + ADP + H(+). The protein operates within amino-sugar metabolism; 1,6-anhydro-N-acetylmuramate degradation. It functions in the pathway cell wall biogenesis; peptidoglycan recycling. In terms of biological role, catalyzes the specific phosphorylation of 1,6-anhydro-N-acetylmuramic acid (anhMurNAc) with the simultaneous cleavage of the 1,6-anhydro ring, generating MurNAc-6-P. Is required for the utilization of anhMurNAc either imported from the medium or derived from its own cell wall murein, and thus plays a role in cell wall recycling. The polypeptide is Anhydro-N-acetylmuramic acid kinase (Bacillus cereus (strain Q1)).